Consider the following 420-residue polypeptide: Histidine--tRNA ligase (420 aa).

It belongs to the class-II aminoacyl-tRNA synthetase family. In terms of assembly, homodimer.

It is found in the cytoplasm. It catalyses the reaction tRNA(His) + L-histidine + ATP = L-histidyl-tRNA(His) + AMP + diphosphate + H(+). The protein is Histidine--tRNA ligase of Acholeplasma laidlawii (strain PG-8A).